The chain runs to 102 residues: Putative nuclear receptor corepressor 1-like protein NCOR1P1 (102 aa).

The span at Met-1–Ser-18 shows a compositional bias: polar residues. A disordered region spans residues Met-1–Ser-68. Residues Ser-68–Val-100 are a coiled coil.

It belongs to the N-CoR nuclear receptor corepressors family.

In Homo sapiens (Human), this protein is Putative nuclear receptor corepressor 1-like protein NCOR1P1 (NCOR1P1).